The chain runs to 59 residues: Anti-inflammatory peptide amregulin (59 aa).

Residues 1–19 (MKLHMLNMLNCLLLTVCDG) form the signal peptide.

As to expression, salivary glands.

Its subcellular location is the secreted. Its function is as follows. Anti-inflammatory peptide that may facilitate successful blood feeding of ticks and may lead to immunotolerance in its host. Inhibits the secretion of inflammatory factors in rat splenocytes, such as tumor necrosis factor-alpha (TNF), interleukin-1, interleukin-8 (CXCL8) and interferon-gamma (IFNG). In addition, shows strong free radical scavenging and antioxidant activities in vitro. In vivo, inhibits adjuvant-induced paw inflammation in mouse models. This Amblyomma variegatum (Tropical bont tick) protein is Anti-inflammatory peptide amregulin.